The following is a 4262-amino-acid chain: Polyketide synthase PksM (4262 aa).

Positions 1–114 (MITEQLHISL…ADMHRKEQTA (114 aa)) are N-terminal hotdog fold 1. Residues 1–271 (MITEQLHISL…GKSVRNMSAF (271 aa)) form the PKS/mFAS DH 1 domain. His-18 acts as the Proton acceptor; for dehydratase activity 1 in catalysis. Positions 129 to 271 (DRILNLDEIY…GKSVRNMSAF (143 aa)) are C-terminal hotdog fold 1. Asp-190 (proton donor; for dehydratase activity 1) is an active-site residue. In terms of domain architecture, Carrier 1 spans 293–367 (PAFEMYLRQL…ELAAHLADHY (75 aa)). Ser-327 is subject to O-(pantetheine 4'-phosphoryl)serine. Residues 393 to 831 (GEDIAIIGMA…GSNAHLILEE (439 aa)) form the Ketosynthase family 3 (KS3) 1 domain. Active-site for beta-ketoacyl synthase 1 activity residues include Cys-569, His-704, and His-744. Residues 1009–1135 (HPLVHRNTSD…GRAVISDEAE (127 aa)) are N-terminal hotdog fold 2. Residues 1009-1301 (HPLVHRNTSD…MRALDGEQHS (293 aa)) form the PKS/mFAS DH 2 domain. His-1038 serves as the catalytic Proton acceptor; for dehydratase activity 2. Residues 1149–1301 (SLDTVTSEQC…MRALDGEQHS (153 aa)) are C-terminal hotdog fold 2. Catalysis depends on Asp-1211, which acts as the Proton donor; for dehydratase activity 2. In terms of domain architecture, Carrier 2 spans 2188-2261 (EKSTEYMKKL…ALVEHFIKTK (74 aa)). Ser-2222 carries the post-translational modification O-(pantetheine 4'-phosphoryl)serine. Positions 2275-2291 (VQQHTPAESRTQSSQKP) are enriched in polar residues. A disordered region spans residues 2275-2313 (VQQHTPAESRTQSSQKPDQAAKRTRRFRKLGFSGEKETP). In terms of domain architecture, Ketosynthase family 3 (KS3) 2 spans 2319–2734 (SRDVAVIGIS…GSNAHIILEE (416 aa)). Residues Cys-2476, His-2611, and His-2651 each act as for beta-ketoacyl synthase 2 activity in the active site. A coiled-coil region spans residues 2750–2826 (ALIVLSAKNM…DFIENKADSL (77 aa)). The Carrier 3 domain occupies 3409-3486 (SIEKRLEHDL…ELISFFLTDH (78 aa)). Ser-3446 is subject to O-(pantetheine 4'-phosphoryl)serine. In terms of domain architecture, Ketosynthase family 3 (KS3) 3 spans 3529–3944 (DEPIAIIGMS…GTNAHAVIEE (416 aa)). Residues Cys-3690, His-3825, and His-3865 each act as for beta-ketoacyl synthase 3 activity in the active site. The stretch at 4004 to 4033 (KAMEARLAIVANNQEQLVRKLKEYVEAMKN) forms a coiled coil. Positions 4135–4212 (NGKTHIQKII…ALSDHLALKA (78 aa)) constitute a Carrier 4 domain. Ser-4172 is subject to O-(pantetheine 4'-phosphoryl)serine.

Pantetheine 4'-phosphate serves as cofactor.

It localises to the cytoplasm. The protein operates within antibiotic biosynthesis; bacillaene biosynthesis. Involved in some intermediate steps for the synthesis of the antibiotic polyketide bacillaene which is involved in secondary metabolism. This is Polyketide synthase PksM (pksM) from Bacillus subtilis (strain 168).